A 448-amino-acid polypeptide reads, in one-letter code: Divalent metal cation transporter MntH (448 aa).

11 helical membrane-spanning segments follow: residues 41–61 (LFAFMGPGALIAVGYVDPGNW), 69–89 (SEFGYTLLSVILISNILAVLL), 117–137 (GFVLWILAELAIIATDIAEVI), 147–167 (FGIPLIWGVCITALDIFLVLF), 176–196 (IEVIVITLMVTILVCFGAEMV), 215–235 (IVTNPAMLYIALGILGATVMP), 270–290 (FSLTIALLINASILILAAAAF), 307–327 (LLNPTLGSSIASTVFAVALLA), 363–383 (VLAIVPAVIITALYGANGINE), 384–404 (LLIFSQVILSMQLSFAVIPLV), and 424–444 (IVSWSVAIFIAFLNIYLLFYT).

Belongs to the NRAMP family.

The protein resides in the cell membrane. Its function is as follows. H(+)-stimulated, divalent metal cation uptake system. The sequence is that of Divalent metal cation transporter MntH from Listeria innocua serovar 6a (strain ATCC BAA-680 / CLIP 11262).